We begin with the raw amino-acid sequence, 182 residues long: MGDEEKRNRAITARRQHLKSVMLQIAATELEKEESRREAEKQNYLAEHCPPLHIPGSMSEVQELCKQLHAKIDAAEEEKYDMEVRVQKTSKELEDMNQKLFDLRGKFKRPPLRRVRMSADAMLKALLGSKHKVCMDLRANLKQVKKEDTEKERDLRDVGDWRKNIEEKSGMEGRKKMFESES.

G2 is subject to N-acetylglycine. The involved in binding TNC stretch occupies residues 2–48 (GDEEKRNRAITARRQHLKSVMLQIAATELEKEESRREAEKQNYLAEH). T12 carries the phosphothreonine modification. Positions 97-117 (NQKLFDLRGKFKRPPLRRVRM) are involved in binding TNC and actin. Position 118 is a phosphoserine (S118).

Belongs to the troponin I family. In terms of assembly, binds to actin and tropomyosin.

In terms of biological role, troponin I is the inhibitory subunit of troponin, the thin filament regulatory complex which confers calcium-sensitivity to striated muscle actomyosin ATPase activity. The polypeptide is Troponin I, fast skeletal muscle (TNNI2) (Homo sapiens (Human)).